A 380-amino-acid chain; its full sequence is Cytochrome b (380 aa).

A run of 4 helical transmembrane segments spans residues 34 to 54 (FGSLLGICLTTQILTGLLLAM), 78 to 99 (WLIRNMHANGASLLFICIYLHI), 114 to 134 (WNTGVILLLTLMATAFVGYVL), and 179 to 199 (FFALHFLLPFMITGLTLIHLT). 2 residues coordinate heme b: His-84 and His-98. Positions 183 and 197 each coordinate heme b. His-202 lines the a ubiquinone pocket. 4 helical membrane-spanning segments follow: residues 227 to 247 (TKDILGFTLMLLPLTTLALFS), 289 to 309 (LGGVLALAASVLVLFLSPLLH), 321 to 341 (LSQLLFWTLVANLLILTWIGS), and 348 to 368 (FIIIGQLASTTYFIILLILFP).

The protein belongs to the cytochrome b family. As to quaternary structure, the cytochrome bc1 complex contains 11 subunits: 3 respiratory subunits (MT-CYB, CYC1 and UQCRFS1), 2 core proteins (UQCRC1 and UQCRC2) and 6 low-molecular weight proteins (UQCRH/QCR6, UQCRB/QCR7, UQCRQ/QCR8, UQCR10/QCR9, UQCR11/QCR10 and a cleavage product of UQCRFS1). This cytochrome bc1 complex then forms a dimer. The cofactor is heme b.

Its subcellular location is the mitochondrion inner membrane. Component of the ubiquinol-cytochrome c reductase complex (complex III or cytochrome b-c1 complex) that is part of the mitochondrial respiratory chain. The b-c1 complex mediates electron transfer from ubiquinol to cytochrome c. Contributes to the generation of a proton gradient across the mitochondrial membrane that is then used for ATP synthesis. In Pygoscelis antarcticus (Chinstrap penguin), this protein is Cytochrome b (MT-CYB).